A 208-amino-acid polypeptide reads, in one-letter code: Transmembrane protein 222 (208 aa).

The tract at residues 1–34 (MAEAEGSSPLLLQPPPPPPRMAEVETPTGAETDM) is disordered. Over 1 to 55 (MAEAEGSSPLLLQPPPPPPRMAEVETPTGAETDMKQYHGSGGVVMDVERSRFPYC) the chain is Extracellular. Residues 56 to 76 (VVWTPIPVLTWFFPIIGHMGI) form a helical membrane-spanning segment. Residues 77–164 (CTSAGVIRDF…MRYNNSTNWN (88 aa)) are Cytoplasmic-facing. The chain crosses the membrane as a helical span at residues 165-185 (MVTLCCFCLIYGKYVSVGAFV). Residue Lys186 is a topological domain, extracellular. Residues 187 to 207 (TWLPFVLLLGIILTVSLVFNL) traverse the membrane as a helical segment. Residue Arg208 is a topological domain, cytoplasmic.

The protein localises to the membrane. It is found in the cell projection. It localises to the dendrite. This chain is Transmembrane protein 222 (Tmem222), found in Mus musculus (Mouse).